Consider the following 40-residue polypeptide: Photosystem II reaction center protein J (40 aa).

The chain crosses the membrane as a helical span at residues 8-28 (IPLWLVATVAGLAAIGVLGIF).

The protein belongs to the PsbJ family. As to quaternary structure, PSII is composed of 1 copy each of membrane proteins PsbA, PsbB, PsbC, PsbD, PsbE, PsbF, PsbH, PsbI, PsbJ, PsbK, PsbL, PsbM, PsbT, PsbX, PsbY, PsbZ, Psb30/Ycf12, at least 3 peripheral proteins of the oxygen-evolving complex and a large number of cofactors. It forms dimeric complexes.

It is found in the plastid. The protein resides in the cyanelle thylakoid membrane. Its function is as follows. One of the components of the core complex of photosystem II (PSII). PSII is a light-driven water:plastoquinone oxidoreductase that uses light energy to abstract electrons from H(2)O, generating O(2) and a proton gradient subsequently used for ATP formation. It consists of a core antenna complex that captures photons, and an electron transfer chain that converts photonic excitation into a charge separation. This Cyanophora paradoxa protein is Photosystem II reaction center protein J.